A 227-amino-acid chain; its full sequence is Translation initiation factor 6 (227 aa).

Belongs to the eIF-6 family.

In terms of biological role, binds to the 50S ribosomal subunit and prevents its association with the 30S ribosomal subunit to form the 70S initiation complex. This chain is Translation initiation factor 6, found in Methanococcus maripaludis (strain C5 / ATCC BAA-1333).